The sequence spans 311 residues: ATP synthase gamma chain (311 aa).

The protein belongs to the ATPase gamma chain family. In terms of assembly, F-type ATPases have 2 components, CF(1) - the catalytic core - and CF(0) - the membrane proton channel. CF(1) has five subunits: alpha(3), beta(3), gamma(1), delta(1), epsilon(1). CF(0) has three main subunits: a, b and c.

The protein resides in the cell membrane. Functionally, produces ATP from ADP in the presence of a proton gradient across the membrane. The gamma chain is believed to be important in regulating ATPase activity and the flow of protons through the CF(0) complex. This chain is ATP synthase gamma chain, found in Limosilactobacillus fermentum (strain NBRC 3956 / LMG 18251) (Lactobacillus fermentum).